The primary structure comprises 107 residues: uncharacterized protein (107 aa).

Residues 13–33 (VLIVTFLSSFIFIVWLPVALV) traverse the membrane as a helical segment.

The protein resides in the membrane. This is an uncharacterized protein from Saccharomyces cerevisiae (strain ATCC 204508 / S288c) (Baker's yeast).